The sequence spans 116 residues: Large ribosomal subunit protein bL17 (116 aa).

Belongs to the bacterial ribosomal protein bL17 family. Part of the 50S ribosomal subunit. Contacts protein L32.

This Thermosynechococcus vestitus (strain NIES-2133 / IAM M-273 / BP-1) protein is Large ribosomal subunit protein bL17.